Consider the following 481-residue polypeptide: ATP synthase subunit beta (481 aa).

Position 167 to 174 (167 to 174) interacts with ATP; sequence GGAGVGKT.

It belongs to the ATPase alpha/beta chains family. As to quaternary structure, F-type ATPases have 2 components, CF(1) - the catalytic core - and CF(0) - the membrane proton channel. CF(1) has five subunits: alpha(3), beta(3), gamma(1), delta(1), epsilon(1). CF(0) has three main subunits: a(1), b(2) and c(9-12). The alpha and beta chains form an alternating ring which encloses part of the gamma chain. CF(1) is attached to CF(0) by a central stalk formed by the gamma and epsilon chains, while a peripheral stalk is formed by the delta and b chains.

The protein localises to the cell membrane. The enzyme catalyses ATP + H2O + 4 H(+)(in) = ADP + phosphate + 5 H(+)(out). Functionally, produces ATP from ADP in the presence of a proton gradient across the membrane. The catalytic sites are hosted primarily by the beta subunits. In Corynebacterium diphtheriae (strain ATCC 700971 / NCTC 13129 / Biotype gravis), this protein is ATP synthase subunit beta.